The chain runs to 201 residues: Pyrrolidone-carboxylate peptidase (201 aa).

Catalysis depends on residues E81, C143, and H168.

It belongs to the peptidase C15 family. Homotetramer.

The protein resides in the cytoplasm. The catalysed reaction is Release of an N-terminal pyroglutamyl group from a polypeptide, the second amino acid generally not being Pro.. In terms of biological role, removes 5-oxoproline from various penultimate amino acid residues except L-proline. The polypeptide is Pyrrolidone-carboxylate peptidase (pcp) (Halalkalibacterium halodurans (strain ATCC BAA-125 / DSM 18197 / FERM 7344 / JCM 9153 / C-125) (Bacillus halodurans)).